A 148-amino-acid chain; its full sequence is Putative cyclin-dependent kinase inhibitor SPL2 (148 aa).

Phosphoserine occurs at positions 59 and 86.

It localises to the cytoplasmic granule. The protein resides in the cytoplasm. In terms of biological role, putative cyclin-dependent kinase (CDK) inhibitor necessary and sufficient for PHO pathway-dependent down-regulation of low-affinity phosphate transport. This is Putative cyclin-dependent kinase inhibitor SPL2 (SPL2) from Saccharomyces cerevisiae (strain ATCC 204508 / S288c) (Baker's yeast).